The sequence spans 455 residues: Chromosomal replication initiator protein DnaA (455 aa).

Positions 1–75 (MLERNDLWNL…AMQATNEQIR (75 aa)) are domain I, interacts with DnaA modulators. The interval 75-117 (RPVMITEEERQQLTRDKDSQVTTGNVAGQQPTTATTPTFMRET) is domain II. The segment covering 84 to 93 (RQQLTRDKDS) has biased composition (basic and acidic residues). The disordered stretch occupies residues 84 to 107 (RQQLTRDKDSQVTTGNVAGQQPTT). Residues 118 to 334 (KLNPKYTFDT…GALARVQAYS (217 aa)) form a domain III, AAA+ region region. ATP contacts are provided by Gly-162, Gly-164, Lys-165, and Thr-166. Residues 335–455 (RLNNSPITTS…VGDLTGQLKS (121 aa)) form a domain IV, binds dsDNA region.

It belongs to the DnaA family. As to quaternary structure, oligomerizes as a right-handed, spiral filament on DNA at oriC.

The protein resides in the cytoplasm. Functionally, plays an essential role in the initiation and regulation of chromosomal replication. ATP-DnaA binds to the origin of replication (oriC) to initiate formation of the DNA replication initiation complex once per cell cycle. Binds the DnaA box (a 9 base pair repeat at the origin) and separates the double-stranded (ds)DNA. Forms a right-handed helical filament on oriC DNA; dsDNA binds to the exterior of the filament while single-stranded (ss)DNA is stabiized in the filament's interior. The ATP-DnaA-oriC complex binds and stabilizes one strand of the AT-rich DNA unwinding element (DUE), permitting loading of DNA polymerase. After initiation quickly degrades to an ADP-DnaA complex that is not apt for DNA replication. Binds acidic phospholipids. This chain is Chromosomal replication initiator protein DnaA, found in Lactiplantibacillus plantarum (strain ATCC BAA-793 / NCIMB 8826 / WCFS1) (Lactobacillus plantarum).